Reading from the N-terminus, the 662-residue chain is PsbB mRNA maturation factor Mbb1, chloroplastic (662 aa).

The N-terminal 50 residues, Met-1–Ala-50, are a transit peptide targeting the chloroplast. 2 disordered regions span residues Arg-14–Ala-38 and Ile-75–Ala-101. Positions Ser-23–Ser-32 are enriched in low complexity. Residues Glu-88–Ala-101 are compositionally biased toward basic and acidic residues. TPR repeat units follow at residues Ser-126 to Asp-160, Pro-161 to Val-194, Pro-196 to His-229, Cys-231 to Lys-263, Ala-269 to Ala-302, Val-305 to Ser-338, Arg-339 to Asp-372, Pro-373 to Asp-406, Tyr-408 to Ser-440, and Val-444 to Ser-477. Disordered stretches follow at residues Ser-540–Ala-563 and Leu-598–Gly-662.

As to quaternary structure, part of a 300 kDa complex that associates with RNA.

It localises to the plastid. The protein localises to the chloroplast stroma. Its function is as follows. Involved, directly or indirectly, in the processing of the chloroplast encoded psbB mRNA to its mature form, acting via the 5'-UTR of the psbB mRNA. The protein is PsbB mRNA maturation factor Mbb1, chloroplastic (MBB1) of Chlamydomonas reinhardtii (Chlamydomonas smithii).